A 160-amino-acid polypeptide reads, in one-letter code: SsrA-binding protein (160 aa).

Belongs to the SmpB family.

The protein resides in the cytoplasm. In terms of biological role, required for rescue of stalled ribosomes mediated by trans-translation. Binds to transfer-messenger RNA (tmRNA), required for stable association of tmRNA with ribosomes. tmRNA and SmpB together mimic tRNA shape, replacing the anticodon stem-loop with SmpB. tmRNA is encoded by the ssrA gene; the 2 termini fold to resemble tRNA(Ala) and it encodes a 'tag peptide', a short internal open reading frame. During trans-translation Ala-aminoacylated tmRNA acts like a tRNA, entering the A-site of stalled ribosomes, displacing the stalled mRNA. The ribosome then switches to translate the ORF on the tmRNA; the nascent peptide is terminated with the 'tag peptide' encoded by the tmRNA and targeted for degradation. The ribosome is freed to recommence translation, which seems to be the essential function of trans-translation. This is SsrA-binding protein from Shewanella amazonensis (strain ATCC BAA-1098 / SB2B).